Here is a 629-residue protein sequence, read N- to C-terminus: 1-deoxy-D-xylulose-5-phosphate synthase (629 aa).

Thiamine diphosphate is bound by residues H72 and 113 to 115 (GHA). D144 provides a ligand contact to Mg(2+). Thiamine diphosphate is bound by residues 145 to 146 (GA), N174, Y287, and E370. N174 provides a ligand contact to Mg(2+).

The protein belongs to the transketolase family. DXPS subfamily. As to quaternary structure, homodimer. The cofactor is Mg(2+). It depends on thiamine diphosphate as a cofactor.

It catalyses the reaction D-glyceraldehyde 3-phosphate + pyruvate + H(+) = 1-deoxy-D-xylulose 5-phosphate + CO2. It functions in the pathway metabolic intermediate biosynthesis; 1-deoxy-D-xylulose 5-phosphate biosynthesis; 1-deoxy-D-xylulose 5-phosphate from D-glyceraldehyde 3-phosphate and pyruvate: step 1/1. Functionally, catalyzes the acyloin condensation reaction between C atoms 2 and 3 of pyruvate and glyceraldehyde 3-phosphate to yield 1-deoxy-D-xylulose-5-phosphate (DXP). The chain is 1-deoxy-D-xylulose-5-phosphate synthase from Prochlorococcus marinus (strain MIT 9301).